Consider the following 642-residue polypeptide: MPVITLPDGSQRHYDHAVSPMDVALDIGPGLAKACIAGRVNGELVDACDLIENDAQLSIITAKDEDGLEIIRHSCAHLLGHAIKQLWPHTKMAIGPVIDNGFYYDVDLDRTLTQEDVEALEKRMHELAEKNYDVIKKKVSWHEARETFANRGESYKVSILDENIAHDDKPGLYFHEEYVDMCRGPHVPNMRFCHHFKLMKTAGAYWRGDSNNKMLQRIYGTAWADKKALNAYLQRLEEAAKRDHRKIGKQLDLYHMQEEAPGMVFWHNDGWTIFRELEVFVRSKLKEYQYQEVKGPFMMDRVLWEKTGHWDNYKDAMFTTSSENREYCIKPMNCPGHVQIFNQGLKSYRDLPLRMAEFGSCHRNEPSGSLHGLMRVRGFTQDDAHIFCTEEQIRDEVNGCIRLVYDMYSTFGFEKIVVKLSTRPEKRIGSDEMWDRAEADLAVALEENNIPFEYQLGEGAFYGPKIEFTLYDCLDRAWQCGTVQLDFSLPSRLSASYVGEDNERKVPVMIHRAILGSMERFIGILTEEFAGFFPTWLAPVQVVIMNITDSQSEYVNELTQKLSNAGIRVKADLRNEKIGFKIREHTLRRVPYMLVCGDKEVESGKVAVRTRRGKDLGSMDVNEVIEKLQQEIRSRSLKQLEE.

One can recognise a TGS domain in the interval 1-61 (MPVITLPDGS…ENDAQLSIIT (61 aa)). The interval 243-534 (DHRKIGKQLD…LTEEFAGFFP (292 aa)) is catalytic. The residue at position 286 (lysine 286) is an N6-acetyllysine. Residues cysteine 334, histidine 385, and histidine 511 each contribute to the Zn(2+) site.

The protein belongs to the class-II aminoacyl-tRNA synthetase family. As to quaternary structure, homodimer. Zn(2+) is required as a cofactor.

Its subcellular location is the cytoplasm. The catalysed reaction is tRNA(Thr) + L-threonine + ATP = L-threonyl-tRNA(Thr) + AMP + diphosphate + H(+). Functionally, catalyzes the attachment of threonine to tRNA(Thr) in a two-step reaction: L-threonine is first activated by ATP to form Thr-AMP and then transferred to the acceptor end of tRNA(Thr). Also edits incorrectly charged L-seryl-tRNA(Thr). The polypeptide is Threonine--tRNA ligase (Escherichia coli O8 (strain IAI1)).